The primary structure comprises 943 residues: MSKKRLYEIAKEVGVESKVIVAKAQELGLSVKSHSSSVEEADANRITSSLKAGTAKDESKPAPKATPTPKEEKVEPKVDKASVAKSAPAKETSKAEVKEASVALKKPKSRNFKAEREARAKAEAERRKNGGGRDNRNRNQQGNDQGKRHNNDRRNQKGNGQGDHNKGNRDNSTNHDRNFQGKLRNDQNQNNRRDNARNNQAGPRIDLKARAAALKAEQNAEYSRQSETRFREEKAAEQRRAKEQEKARKEKQQAEVAVQKAAAETKPAPKPAPVAPQSAPTAQVQDTRRKKVRPNKSRDNHRVNEDGPKQTRNNKWNNQNQVRNQRNSNWNKNKNKKGKNNRGNSAPKLVTERKFHELPKEFEYTEGMTVAEIAKRIKREPAEIVKKLFMMGVMATQNQSLDGDTIELLMVDYGIEATKKEEVDNADIERFFVDEDYLNKDAMVERAPVVTIMGHVDHGKTTLLDTLRNSRVATGEAGGITQHIGAYQIEEGGKKITFLDTPGHAAFTSMRARGASVTDITVLIVAADDGVMPQTIEAINHSKAAGVPIIVAINKIDKPDANPERVIGELAEHGVISTAWGGDSEFVEISAKFGQNIEELLETILLVAEVEELKADPTVRAIGTVIEARLDKGKGAVATLLVQQGTLNVQDPIVVGNTFGRVRAMTNDLGRRIKTAGPSAPVSITGLNEAPMAGDHFAVYEDEKAARAAGEERAKRALMKQRQQTHRVSLDNLFDTLKAGEMKTVNVIIKADVQGSVEALAASLLKIDVEGVRVNVVHSAVGAINESDITLAEASDAVVIGFNVRPTPQARQQAETDEVEIRLHSIIYKVIEEIEDAMKGMLDPEFEEKIIGEAVIRETFKVSKVGTIGGFMVTNGKITRDSSARVIRDGVVIFDGKLASLKHYKDDVKEVGNAQEGGLTIENYNDIKVDDVIEAYIMEEIKR.

The disordered stretch occupies residues Leu29–Leu349. 5 stretches are compositionally biased toward basic and acidic residues: residues Pro69–Ser82, Phe112–Asn137, Gln145–Asn155, Asp163–Ala196, and Arg224–Gln253. Residues Ala254–Lys266 are compositionally biased toward low complexity. Positions Lys296–Lys309 are enriched in basic and acidic residues. The segment covering Asn313–Lys332 has biased composition (low complexity). One can recognise a tr-type G domain in the interval Glu445 to Lys614. Positions Gly454–Thr461 are G1. Gly454–Thr461 contributes to the GTP binding site. The interval Gly479–His483 is G2. Positions Asp500–Gly503 are G3. Residues Asp500–His504 and Asn554–Asp557 contribute to the GTP site. Residues Asn554 to Asp557 are G4. The interval Ser590–Lys592 is G5.

It belongs to the TRAFAC class translation factor GTPase superfamily. Classic translation factor GTPase family. IF-2 subfamily.

It is found in the cytoplasm. In terms of biological role, one of the essential components for the initiation of protein synthesis. Protects formylmethionyl-tRNA from spontaneous hydrolysis and promotes its binding to the 30S ribosomal subunits. Also involved in the hydrolysis of GTP during the formation of the 70S ribosomal complex. This chain is Translation initiation factor IF-2, found in Streptococcus thermophilus (strain ATCC BAA-491 / LMD-9).